Consider the following 169-residue polypeptide: S-ribosylhomocysteine lyase (169 aa).

His54, His58, and Cys128 together coordinate Fe cation.

It belongs to the LuxS family. As to quaternary structure, homodimer. It depends on Fe cation as a cofactor.

It catalyses the reaction S-(5-deoxy-D-ribos-5-yl)-L-homocysteine = (S)-4,5-dihydroxypentane-2,3-dione + L-homocysteine. Functionally, involved in the synthesis of autoinducer 2 (AI-2) which is secreted by bacteria and is used to communicate both the cell density and the metabolic potential of the environment. The regulation of gene expression in response to changes in cell density is called quorum sensing. Catalyzes the transformation of S-ribosylhomocysteine (RHC) to homocysteine (HC) and 4,5-dihydroxy-2,3-pentadione (DPD). The chain is S-ribosylhomocysteine lyase from Shewanella sp. (strain MR-4).